A 396-amino-acid polypeptide reads, in one-letter code: MAKKIVTDLELKGKTVLVRADFNVPMKDGEITDDNRIVQALPTIKYIIEQGGKVVLFSHLGKVKEESDKAALTLKPVANALTEKLGEEVTFVPETRGETLEQSVKDLNEGDVLLVENTRFEDVDGKKESKNDPELGKYWASLGDVFVNDAFGTAHREHASNVGIASNLETVAGFLMEKEIKYIGGVVENPDKPVVAILGGAKVSDKIGVITNLLKIADKVLIGGGMSYTFFKAQGKEIGLSLLEKDKVDFAKELLDRAGDQIVLPVDCKVAKEFSNDAEITEVSVDDIPADQEAMDIGPKSVELFKEQLQGAHTVVWNGPMGVFELSNFAKGTIGVCEAIAELKDANTIIGGGDSAAAAISLGYGDDFSHISTGGGASLEYLEGKELPGVVAIANK.

Residues 21 to 23, arginine 36, 59 to 62, arginine 119, and arginine 156 contribute to the substrate site; these read DFN and HLGK. Residues lysine 206, glutamate 325, and 352 to 355 each bind ATP; that span reads GGDS.

The protein belongs to the phosphoglycerate kinase family. Monomer.

Its subcellular location is the cytoplasm. It catalyses the reaction (2R)-3-phosphoglycerate + ATP = (2R)-3-phospho-glyceroyl phosphate + ADP. It participates in carbohydrate degradation; glycolysis; pyruvate from D-glyceraldehyde 3-phosphate: step 2/5. The chain is Phosphoglycerate kinase from Staphylococcus saprophyticus subsp. saprophyticus (strain ATCC 15305 / DSM 20229 / NCIMB 8711 / NCTC 7292 / S-41).